Here is a 238-residue protein sequence, read N- to C-terminus: Photosynthetic NDH subunit of lumenal location 1, chloroplastic (238 aa).

The protein belongs to the PsbP family. In terms of assembly, part of the chloroplast NDH complex, composed of a mixture of chloroplast and nucleus encoded subunits. Component of the NDH lumenal subcomplex, at least composed of PnsL1, PnsL2, PnsL3, PnsL4 and PnsL5.

It is found in the plastid. Its subcellular location is the chloroplast thylakoid membrane. In terms of biological role, NDH shuttles electrons from NAD(P)H:plastoquinone, via FMN and iron-sulfur (Fe-S) centers, to quinones in the photosynthetic chain and possibly in a chloroplast respiratory chain. The immediate electron acceptor for the enzyme in this species is believed to be plastoquinone. Couples the redox reaction to proton translocation, and thus conserves the redox energy in a proton gradient. Required for accumulation of the chloroplast NAD(P)H dehydrogenase (NDH) complex. The sequence is that of Photosynthetic NDH subunit of lumenal location 1, chloroplastic from Arabidopsis thaliana (Mouse-ear cress).